The primary structure comprises 417 residues: Cobalamin binding intrinsic factor (417 aa).

The signal sequence occupies residues 1-22 (MAWFSLHLLHLLWAAAGTSTWA). Cystine bridges form between C26-C246, C103-C288, and C143-C182. Residue N100 is glycosylated (N-linked (GlcNAc...) asparagine). D171 provides a ligand contact to cob(II)alamin. Position 191 is a phosphoserine (S191). N209 carries an N-linked (GlcNAc...) asparagine glycan. Residues D222 and Q270 each contribute to the cob(II)alamin site. N311 and N330 each carry an N-linked (GlcNAc...) asparagine glycan. Cob(II)alamin contacts are provided by residues 365–370 (SWGLVV) and 386–395 (WQFLSGKTPL). N-linked (GlcNAc...) asparagine glycosylation is present at N413.

Belongs to the eukaryotic cobalamin transport proteins family. As to quaternary structure, interacts with CUBN (via CUB domains).

It localises to the secreted. Functionally, promotes absorption of the essential vitamin cobalamin (Cbl) in the ileum. After interaction with CUBN, the CBLIF-cobalamin complex is internalized via receptor-mediated endocytosis. This chain is Cobalamin binding intrinsic factor (CBLIF), found in Canis lupus familiaris (Dog).